An 813-amino-acid chain; its full sequence is Immunoglobulin superfamily DCC subclass member 3 (813 aa).

A disordered region spans residues 1–21 (MAEPRTASPRRLPALRRPGFL). The first 47 residues, 1-47 (MAEPRTASPRRLPALRRPGFLPPLLPPPPPPLLLLLLLLPLPAPSLG), serve as a signal peptide directing secretion. Residues 9-19 (PRRLPALRRPG) are compositionally biased toward low complexity. 4 Ig-like C2-type domains span residues 49–151 (GHSA…ATMS), 151–232 (SDFH…VRVS), 250–333 (PTIL…RTAQ), and 341–428 (PAEF…ARLT). Intrachain disulfides connect C75–C129 and C172–C221. N-linked (GlcNAc...) asparagine glycosylation occurs at N105. N-linked (GlcNAc...) asparagine glycosylation is present at N258. 2 cysteine pairs are disulfide-bonded: C271–C319 and C363–C412. 2 N-linked (GlcNAc...) asparagine glycosylation sites follow: N393 and N394. 2 consecutive Fibronectin type-III domains span residues 438–532 (PPRN…TLGE) and 535–630 (VPPP…ASER). N-linked (GlcNAc...) asparagine glycans are attached at residues N592, N616, and N646. A helical transmembrane segment spans residues 653–673 (IVIGIHIGVTCIIFCVLFLLF). Disordered stretches follow at residues 689 to 724 (LSPP…EKPV) and 775 to 813 (TTEA…AAPQ).

Belongs to the immunoglobulin superfamily. DCC family. In terms of tissue distribution, detected in cerebellum, kidney, heart, lung, skeletal muscle and spleen.

The protein resides in the membrane. This Mus musculus (Mouse) protein is Immunoglobulin superfamily DCC subclass member 3 (Igdcc3).